The chain runs to 839 residues: AMP deaminase (839 aa).

Residues Leu-8 to Phe-28 traverse the membrane as a helical segment. A disordered region spans residues Glu-40 to Glu-167. The span at Asp-85–Thr-94 shows a compositional bias: gly residues. Residues Ser-134 and Ser-140 each carry the phosphoserine modification. The span at Ser-153–Asn-162 shows a compositional bias: acidic residues. Residue Ser-203 is modified to Phosphoserine. Ala-289 to Ser-296 is a binding site for ATP. His-391 and His-393 together coordinate Zn(2+). Substrate is bound by residues His-393 and Lys-462 to Tyr-467. Zn(2+) is bound at residue His-659. Residue Glu-662 coordinates substrate. Catalysis depends on His-681, which acts as the Proton acceptor. Asp-736 contacts Zn(2+). Position 737-740 (Asp-737–Gln-740) interacts with substrate.

Belongs to the metallo-dependent hydrolases superfamily. Adenosine and AMP deaminases family. In terms of assembly, homodimer. Interacts with AHK4. Interacts with EER5. Requires Zn(2+) as cofactor. As to expression, expressed in seedlings, roots, leaves, flowers, pollen grains, pollen tubes and siliques, and at a lower level in stems.

The protein resides in the membrane. It localises to the microsome membrane. The catalysed reaction is AMP + H2O + H(+) = IMP + NH4(+). It participates in purine metabolism; IMP biosynthesis via salvage pathway; IMP from AMP: step 1/1. With respect to regulation, activated by ATP. Activated by sulfate ions (in vitro). Inhibited by phosphate ions. AMP deaminase plays a critical role in energy metabolism. Essential for the transition from zygote to embryo. This chain is AMP deaminase, found in Arabidopsis thaliana (Mouse-ear cress).